We begin with the raw amino-acid sequence, 144 residues long: Large ribosomal subunit protein uL15 (144 aa).

A disordered region spans residues 1-57 (MKLNDLSPAPGSRREKHRPGRGIGSGLGKTGGRGHKGQTSRSGGSIAPGFEGGQQPL). Positions 21 to 31 (RGIGSGLGKTG) are enriched in gly residues.

It belongs to the universal ribosomal protein uL15 family. Part of the 50S ribosomal subunit.

In terms of biological role, binds to the 23S rRNA. This is Large ribosomal subunit protein uL15 from Pseudomonas putida (strain ATCC 700007 / DSM 6899 / JCM 31910 / BCRC 17059 / LMG 24140 / F1).